Consider the following 313-residue polypeptide: Methionyl-tRNA formyltransferase (313 aa).

A disordered region spans residues 32–51; sequence QPDRRKGRGKELQPPPAKRK. 109–112 serves as a coordination point for (6S)-5,6,7,8-tetrahydrofolate; that stretch reads SLLP.

This sequence belongs to the Fmt family.

The catalysed reaction is L-methionyl-tRNA(fMet) + (6R)-10-formyltetrahydrofolate = N-formyl-L-methionyl-tRNA(fMet) + (6S)-5,6,7,8-tetrahydrofolate + H(+). Attaches a formyl group to the free amino group of methionyl-tRNA(fMet). The formyl group appears to play a dual role in the initiator identity of N-formylmethionyl-tRNA by promoting its recognition by IF2 and preventing the misappropriation of this tRNA by the elongation apparatus. This is Methionyl-tRNA formyltransferase from Natranaerobius thermophilus (strain ATCC BAA-1301 / DSM 18059 / JW/NM-WN-LF).